The chain runs to 76 residues: Small ribosomal subunit protein bS16 (76 aa).

The protein belongs to the bacterial ribosomal protein bS16 family.

This is Small ribosomal subunit protein bS16 from Helicobacter pylori (strain P12).